A 248-amino-acid polypeptide reads, in one-letter code: Cell division protein FtsQ (248 aa).

The Cytoplasmic portion of the chain corresponds to 1 to 4; sequence MGTR. The helical transmembrane segment at 5–25 threads the bilayer; that stretch reads LRALLGVLILLVLGGAGWLFL. The Periplasmic portion of the chain corresponds to 26-248; sequence RWEPTLLPIR…RVAARAGNRR (223 aa). In terms of domain architecture, POTRA spans 32 to 101; it reads LPIRLIQIEG…DTLRVQVREY (70 aa).

The protein belongs to the FtsQ/DivIB family. FtsQ subfamily. In terms of assembly, part of a complex composed of FtsB, FtsL and FtsQ.

It localises to the cell inner membrane. Its function is as follows. Essential cell division protein. May link together the upstream cell division proteins, which are predominantly cytoplasmic, with the downstream cell division proteins, which are predominantly periplasmic. May control correct divisome assembly. This is Cell division protein FtsQ from Allochromatium vinosum (strain ATCC 17899 / DSM 180 / NBRC 103801 / NCIMB 10441 / D) (Chromatium vinosum).